The sequence spans 369 residues: Cobalt-precorrin-5B C(1)-methyltransferase (369 aa).

Belongs to the CbiD family.

The enzyme catalyses Co-precorrin-5B + S-adenosyl-L-methionine = Co-precorrin-6A + S-adenosyl-L-homocysteine. The protein operates within cofactor biosynthesis; adenosylcobalamin biosynthesis; cob(II)yrinate a,c-diamide from sirohydrochlorin (anaerobic route): step 6/10. Catalyzes the methylation of C-1 in cobalt-precorrin-5B to form cobalt-precorrin-6A. In Brucella melitensis biotype 2 (strain ATCC 23457), this protein is Cobalt-precorrin-5B C(1)-methyltransferase.